The chain runs to 500 residues: NAD(P)H-quinone oxidoreductase chain 4, chloroplastic (500 aa).

The next 14 membrane-spanning stretches (helical) occupy residues 4–24, 35–55, 87–107, 113–130, 134–154, 167–187, 208–228, 242–262, 272–292, 305–325, 330–350, 386–406, 416–436, and 462–482; these read FPWLTIIVVFPIFAGSLIFFL, YTICICILELLLTTYAFCYHF, IGPILLTGFITTLATLAAWPV, LFHFLMLAMYSGQIGLFS, LLLFFIMWELELIPVYLLLAM, FILYTAGGSVFLLMGVLGVAL, VLEIIFYIGFFIAFAVKSPII, HYSTCMLLAGILLKMGAYGLI, AHSIFSPWLMIIGTIQIIYAA, IAYSSVSHMGFIIIGISSLTD, GALLQIISHGFIGAALFFLAG, LALPGMSGFVAELIVFFGIIT, LLITFVMAIGIILTPIYSLSM, and LFLSISIFLPVIGIGIYPDFV.

This sequence belongs to the complex I subunit 4 family.

The protein localises to the plastid. The protein resides in the chloroplast thylakoid membrane. The catalysed reaction is a plastoquinone + NADH + (n+1) H(+)(in) = a plastoquinol + NAD(+) + n H(+)(out). It carries out the reaction a plastoquinone + NADPH + (n+1) H(+)(in) = a plastoquinol + NADP(+) + n H(+)(out). The polypeptide is NAD(P)H-quinone oxidoreductase chain 4, chloroplastic (Solanum lycopersicum (Tomato)).